The following is a 218-amino-acid chain: 3-dehydroquinate dehydratase (218 aa).

Residues 29–31 (EFR) and Arg56 each bind 3-dehydroquinate. His116 serves as the catalytic Proton donor/acceptor. Lys142 (schiff-base intermediate with substrate) is an active-site residue. 3 residues coordinate 3-dehydroquinate: Arg180, Ser200, and Gln204.

The protein belongs to the type-I 3-dehydroquinase family. In terms of assembly, homodimer.

The enzyme catalyses 3-dehydroquinate = 3-dehydroshikimate + H2O. It functions in the pathway metabolic intermediate biosynthesis; chorismate biosynthesis; chorismate from D-erythrose 4-phosphate and phosphoenolpyruvate: step 3/7. Involved in the third step of the chorismate pathway, which leads to the biosynthesis of aromatic amino acids. Catalyzes the cis-dehydration of 3-dehydroquinate (DHQ) and introduces the first double bond of the aromatic ring to yield 3-dehydroshikimate. The polypeptide is 3-dehydroquinate dehydratase (Methanococcus maripaludis (strain C5 / ATCC BAA-1333)).